The following is a 406-amino-acid chain: Cyclin-dependent kinase 4 homolog (406 aa).

Residues 102 to 388 (TFLFQALGKG…ARGALSHPFL (287 aa)) form the Protein kinase domain. ATP is bound by residues 108–116 (LGKGAYGNV) and K131. The Proton acceptor role is filled by D233. Mg(2+) contacts are provided by N238 and D251.

Belongs to the protein kinase superfamily. CMGC Ser/Thr protein kinase family. CDC2/CDKX subfamily. In terms of assembly, interacts with cyd-1; the interaction is likely involved in regulating cdk-4 activity. It depends on Mg(2+) as a cofactor.

The catalysed reaction is L-seryl-[protein] + ATP = O-phospho-L-seryl-[protein] + ADP + H(+). The enzyme catalyses L-threonyl-[protein] + ATP = O-phospho-L-threonyl-[protein] + ADP + H(+). In terms of biological role, serine/threonine-protein kinase which, in association with cyclin D-like protein cyd-1, is required for the progression through the G1 phase of the cell cycle during postembryonic development by phosphorylating and inhibiting lin-35 and fzr-1. In complex with cyd-1, involved in sex determination during gonadogenesis by regulating the asymmetric division of the somatic gonadal precursor cell (SGP). This Caenorhabditis elegans protein is Cyclin-dependent kinase 4 homolog.